The chain runs to 134 residues: uncharacterized protein (134 aa).

Residues serine 110 to serine 130 form a helical membrane-spanning segment.

The protein resides in the membrane. This is an uncharacterized protein from Saccharomyces cerevisiae (strain ATCC 204508 / S288c) (Baker's yeast).